Consider the following 309-residue polypeptide: SERTA domain-containing protein 2 (309 aa).

Disordered stretches follow at residues 1–30 (MLGK…GPSR), 79–114 (EGSL…CDLG), and 175–220 (PTST…MDSL). Residues 8–18 (RKFDEHEDGLE) show a composition bias toward basic and acidic residues. Residues 33–80 (YTLQRQTIFNISLMKLYNHRPLTEPSLQKTVLINNMLRRIQEELKQEG) form the SERTA domain. Low complexity-rich tracts occupy residues 89 to 99 (SSQPSNSLSDS) and 175 to 189 (PTST…AAPE). The segment covering 204 to 216 (EGPEEGRTDDSRF) has biased composition (basic and acidic residues). The required for transactivation activity stretch occupies residues 230–306 (TGFLTDLTLD…TELDHIMEVL (77 aa)). The short motif at 233-238 (LTDLTL) is the Nuclear export signal (NES) element.

In terms of assembly, interacts with XPO1; which mediates nuclear export. Interacts with TFDP1; modulates transactivation activity of TFDP1/E2F complexes. In terms of processing, polyubiquitinated, which promotes proteasomal degradation. As to expression, expressed in white and brown adipose tissue.

It is found in the nucleus. The protein resides in the cytoplasm. Functionally, acts at E2F-responsive promoters as coregulator to integrate signals provided by PHD- and/or bromodomain-containing transcription factors. May act as coactivator as well as corepressor of E2F1-TFDP1 and E2F4-TFDP1 complexes on E2F consensus binding sites, which would activate or inhibit E2F-target genes expression. Modulates fat storage by down-regulating the expression of key genes involved in adipocyte lipolysis, thermogenesis and oxidative metabolism. This is SERTA domain-containing protein 2 (Sertad2) from Mus musculus (Mouse).